We begin with the raw amino-acid sequence, 515 residues long: Probable coatomer subunit delta (515 aa).

Residues 161–180 (AKQAMAEKAKELKRAQKEAL) show a composition bias toward basic and acidic residues. Residues 161–231 (AKQAMAEKAK…GGKALKLGGK (71 aa)) are disordered. Low complexity predominate over residues 187–198 (SYQSSTGISSSS). The MHD domain occupies 276-515 (REVVHVRTEE…TFNSENFEIV (240 aa)).

Belongs to the adaptor complexes medium subunit family. Delta-COP subfamily. As to quaternary structure, oligomeric complex that consists of at least the alpha, beta, beta', gamma, delta, epsilon and zeta subunits.

Its subcellular location is the cytoplasm. The protein localises to the golgi apparatus membrane. The protein resides in the cytoplasmic vesicle. It is found in the COPI-coated vesicle membrane. The coatomer is a cytosolic protein complex that binds to dilysine motifs and reversibly associates with Golgi non-clathrin-coated vesicles, which further mediate biosynthetic protein transport from the ER, via the Golgi up to the trans Golgi network. Coatomer complex is required for budding from Golgi membranes, and is essential for the retrograde Golgi-to-ER transport of dilysine-tagged proteins. The polypeptide is Probable coatomer subunit delta (Caenorhabditis elegans).